Reading from the N-terminus, the 333-residue chain is Complement C1q and tumor necrosis factor-related protein 9 (333 aa).

The first 19 residues, 1–19 (MRIWWLLLVMGACTRSVFS), serve as a signal peptide directing secretion. The tract at residues 22-194 (TCRQGHSGIP…GDRGEKGKVG (173 aa)) is disordered. 3 Collagen-like domains span residues 24–82 (RQGH…DGRV), 84–130 (AKGI…KGEV), and 134–193 (GPEG…KGKV). 4-hydroxyproline is present on residues Pro31, Pro34, and Pro40. The span at 42–57 (RDGRDGAKGDKGDAGE) shows a compositional bias: basic and acidic residues. Pro58, Pro61, and Pro64 each carry 4-hydroxyproline. Positions 67-88 (DGIRGEKGEPGADGRVEAKGIK) are enriched in basic and acidic residues. Lys73 is modified (5-hydroxylysine). An O-linked (Gal...) hydroxylysine glycan is attached at Lys73. Pro76 and Pro115 each carry 4-hydroxyproline. The residue at position 127 (Lys127) is a 5-hydroxylysine. Residue Lys127 is glycosylated (O-linked (Gal...) hydroxylysine). 4-hydroxyproline occurs at positions 151, 160, and 175. Residues 183-193 (WKGDRGEKGKV) show a composition bias toward basic and acidic residues. In terms of domain architecture, C1q spans 197–333 (PLVPKSAFTV…FTGFLLFSSS (137 aa)).

In terms of assembly, multimers (predominantly trimers). Interacts with ADIPOQ via the C1q domain to form a heterotrimeric complex. Post-translationally, the isomeric forms of the hydroxylated amino acids could not be determined in the mass-spectrometric methods reported in PubMed:18787108 but are assumed on the basis of their occurrence in collagen-like domains. As to expression, expressed predominantly in adipose tissue. Females express higher levels than males.

Its subcellular location is the secreted. In terms of biological role, probable adipokine. Activates AMPK, AKT, and p44/42 MAPK signaling pathways. The protein is Complement C1q and tumor necrosis factor-related protein 9 (C1qtnf9) of Mus musculus (Mouse).